The chain runs to 230 residues: Ubiquitin carboxyl-terminal hydrolase isozyme L3 (230 aa).

The UCH catalytic domain occupies 5-229; the sequence is RWLPLEANPE…LRFNAIALSA (225 aa). Residues 8-13 form an interaction with ubiquitin region; the sequence is PLEANP. Catalysis depends on Cys95, which acts as the Nucleophile. Position 130 is a phosphoserine (Ser130). Positions 152–159 are interaction with ubiquitin. Crossover loop which restricts access of large ubiquitin adducts to the active site; that stretch reads AHEGQTEA. Residue His169 is the Proton donor of the active site. The tract at residues 219–224 is interaction with ubiquitin; that stretch reads ELRFNA.

Belongs to the peptidase C12 family. Preferentially binds diubiquitin; the interaction does not hydrolyze diubiquitin but, in vitro, inhibits the hydrolyzing activity on other substrates.

It is found in the cytoplasm. It catalyses the reaction Thiol-dependent hydrolysis of ester, thioester, amide, peptide and isopeptide bonds formed by the C-terminal Gly of ubiquitin (a 76-residue protein attached to proteins as an intracellular targeting signal).. Its activity is regulated as follows. Inhibited by monoubiquitin and diubiquitin. Functionally, deubiquitinating enzyme (DUB) that controls levels of cellular ubiquitin through processing of ubiquitin precursors and ubiquitinated proteins. Thiol protease that recognizes and hydrolyzes a peptide bond at the C-terminal glycine of either ubiquitin or NEDD8. Has a 10-fold preference for Arg and Lys at position P3, and exhibits a preference towards 'Lys-48'-linked ubiquitin chains. Deubiquitinates ENAC in apical compartments, thereby regulating apical membrane recycling. Indirectly increases the phosphorylation of IGFIR, AKT and FOXO1 and promotes insulin-signaling and insulin-induced adipogenesis. Required for stress-response retinal, skeletal muscle and germ cell maintenance. May be involved in working memory. Can hydrolyze UBB(+1), a mutated form of ubiquitin which is not effectively degraded by the proteasome. The polypeptide is Ubiquitin carboxyl-terminal hydrolase isozyme L3 (UCHL3) (Sus scrofa (Pig)).